Reading from the N-terminus, the 125-residue chain is UPF0251 protein Dhaf_1981 (125 aa).

It belongs to the UPF0251 family.

This chain is UPF0251 protein Dhaf_1981, found in Desulfitobacterium hafniense (strain DSM 10664 / DCB-2).